The sequence spans 207 residues: UPF0319 protein VV2327 (207 aa).

An N-terminal signal peptide occupies residues 1–18 (MLRVLGLAGMLMSFNIHA).

The protein belongs to the UPF0319 family.

The chain is UPF0319 protein VV2327 from Vibrio vulnificus (strain YJ016).